The chain runs to 128 residues: CD59 glycoprotein (128 aa).

Residues 1–25 form the signal peptide; the sequence is MGIQGGSVLFGLLLVLAVFCHSGHS. In terms of domain architecture, UPAR/Ly6 spans 26–108; it reads LQCYNCPNPT…QLENGGTSLS (83 aa). 3 disulfides stabilise this stretch: cysteine 28-cysteine 51, cysteine 31-cysteine 38, and cysteine 44-cysteine 64. An N-linked (GlcNAc...) asparagine glycan is attached at asparagine 43. Lysine 66 carries N-linked (Glc) (glycation) lysine glycosylation. Intrachain disulfides connect cysteine 70-cysteine 88 and cysteine 89-cysteine 94. O-linked (GalNAc...) threonine glycosylation is found at threonine 76 and threonine 77. Asparagine 102 is lipidated: GPI-anchor amidated asparagine. A propeptide spans 103–128 (removed in mature form); it reads GGTSLSEKTVLLLVTPFLAAAWSLHP.

In terms of assembly, interacts with T-cell surface antigen CD2. N- and O-glycosylated. The N-glycosylation mainly consists of a family of biantennary complex-type structures with and without lactosamine extensions and outer arm fucose residues. Also significant amounts of triantennary complexes (22%). Variable sialylation also present in the Asn-43 oligosaccharide. The predominant O-glycans are mono-sialylated forms of the disaccharide, Gal-beta-1,3GalNAc, and their sites of attachment are probably on Thr-76 and Thr-77. The GPI-anchor of soluble urinary CD59 has no inositol-associated phospholipid, but is composed of seven different GPI-anchor variants of one or more monosaccharide units. Major variants contain sialic acid, mannose and glucosamine. Sialic acid linked to an N-acetylhexosamine-galactose arm is present in two variants. In terms of processing, glycated. Glycation is found in diabetic subjects, but only at minimal levels in nondiabetic subjects. Glycated CD59 lacks MAC-inhibitory function and confers to vascular complications of diabetes.

The protein resides in the cell membrane. It localises to the secreted. Potent inhibitor of the complement membrane attack complex (MAC) action, which protects human cells from damage during complement activation. Acts by binding to the beta-haipins of C8 (C8A and C8B) components of the assembling MAC, forming an intermolecular beta-sheet that prevents incorporation of the multiple copies of C9 required for complete formation of the osmolytic pore. Functionally, the soluble form from urine retains its specific complement binding activity, but exhibits greatly reduced ability to inhibit complement membrane attack complex (MAC) assembly on cell membranes. This is CD59 glycoprotein from Homo sapiens (Human).